Reading from the N-terminus, the 159-residue chain is Ribosomal RNA large subunit methyltransferase H (159 aa).

S-adenosyl-L-methionine-binding positions include Leu-76, Gly-108, and 127–132 (FSKMTL).

It belongs to the RNA methyltransferase RlmH family. In terms of assembly, homodimer.

Its subcellular location is the cytoplasm. The enzyme catalyses pseudouridine(1915) in 23S rRNA + S-adenosyl-L-methionine = N(3)-methylpseudouridine(1915) in 23S rRNA + S-adenosyl-L-homocysteine + H(+). Its function is as follows. Specifically methylates the pseudouridine at position 1915 (m3Psi1915) in 23S rRNA. This is Ribosomal RNA large subunit methyltransferase H from Bacillus cytotoxicus (strain DSM 22905 / CIP 110041 / 391-98 / NVH 391-98).